The sequence spans 114 residues: Large ribosomal subunit protein uL18 (114 aa).

This sequence belongs to the universal ribosomal protein uL18 family. In terms of assembly, part of the 50S ribosomal subunit; part of the 5S rRNA/L5/L18/L25 subcomplex. Contacts the 5S and 23S rRNAs.

Functionally, this is one of the proteins that bind and probably mediate the attachment of the 5S RNA into the large ribosomal subunit, where it forms part of the central protuberance. The chain is Large ribosomal subunit protein uL18 from Azobacteroides pseudotrichonymphae genomovar. CFP2.